Reading from the N-terminus, the 13041-residue chain is Nonribosomal peptide synthetase kk1B (13041 aa).

Positions 267-663 (ANRVVDTPQK…GRRDSQIKIR (397 aa)) are adenylation 1. The Carrier 1 domain occupies 788–864 (ASLMTEGITL…GLINVMQQSS (77 aa)). An O-(pantetheine 4'-phosphoryl)serine modification is found at Ser-825. The segment at 882-1313 (SFAQGRLWFL…TPIAHLQLTD (432 aa)) is condensation 1. Positions 1341-1736 (FQKQVAACPN…GRMDFQIKIR (396 aa)) are adenylation 2. Positions 1865–1939 (AARNEIEAVL…NLAATIKRGS (75 aa)) constitute a Carrier 2 domain. Ser-1899 is subject to O-(pantetheine 4'-phosphoryl)serine. Positions 1957–2383 (SFAQGRLWFL…DQPQTPLALL (427 aa)) are condensation 2. Positions 2418 to 2812 (QVAASPNATA…GRMDQQIKIR (395 aa)) are adenylation 3. The tract at residues 2891-3023 (VGNDFMGWTS…EYLSKVLYAL (133 aa)) is methyltransferase (M) domain 1. The region spanning 3353 to 3427 (GARNETEAVL…DLAASIRRGS (75 aa)) is the Carrier 3 domain. Position 3387 is an O-(pantetheine 4'-phosphoryl)serine (Ser-3387). The tract at residues 3445 to 3869 (SFAQGRLWFL…DQPQIPIAVL (425 aa)) is condensation 3. Residues 3901 to 4300 (FRAQVVACPD…GRMDQQVKIR (400 aa)) form an adenylation 4 region. A Carrier 4 domain is found at 4412–4486 (PPRNEIETIL…NLAAAVQRGS (75 aa)). Residue Ser-4446 is modified to O-(pantetheine 4'-phosphoryl)serine. A condensation 4 region spans residues 4504 to 4935 (SFAQGRLWFL…TPIAALSLTD (432 aa)). The tract at residues 4963–5362 (FREQVATYPD…GRMDRQLKIR (400 aa)) is adenylation 5. The segment at 5430 to 5567 (TYAELDTLVK…VAQYFPTPEY (138 aa)) is methyltransferase (M) domain 2. In terms of domain architecture, Carrier 5 spans 5897-5971 (QPRNEVEAVL…DLAAAIQRGS (75 aa)). Ser-5931 is modified (O-(pantetheine 4'-phosphoryl)serine). The condensation 5 stretch occupies residues 5989 to 6416 (SYAQGRLWFL…DQPQTPLALL (428 aa)). Residues 6451–6845 (QVAASPNATA…GRMDQQIKIR (395 aa)) are adenylation 6. The methyltransferase (M) domain 3 stretch occupies residues 6924 to 7056 (VGNDFMGWTS…EYLSKVLYAL (133 aa)). A Carrier 6 domain is found at 7386 to 7460 (GARNEIEAAL…DLAGAVQRGS (75 aa)). An O-(pantetheine 4'-phosphoryl)serine modification is found at Ser-7420. The segment at 7478–7901 (SFAQGRLWFL…GLETPRLPIS (424 aa)) is condensation 6. Residues 7934–8335 (FRTQVAASPD…GRMDRQLKIR (402 aa)) form an adenylation 7 region. The segment at 8404–8540 (YAEIEEIDSS…AQYFPSPEYL (137 aa)) is methyltransferase (M) domain 4. The 75-residue stretch at 8871-8945 (GPRNEIEALL…DLAASIQRGS (75 aa)) folds into the Carrier 7 domain. Ser-8905 carries the post-translational modification O-(pantetheine 4'-phosphoryl)serine. A condensation 7 region spans residues 8963–9392 (SFAQGRLWFL…PKTPIAVLPL (430 aa)). The interval 9422 to 9822 (FRQQVAARPD…SRMDQQVKIR (401 aa)) is adenylation 8. The Carrier 8 domain maps to 9943–10017 (PPTNDMERIL…DLASTIKQDS (75 aa)). O-(pantetheine 4'-phosphoryl)serine is present on Ser-9977. The tract at residues 10035-10462 (SFAQGRLWFL…ETPQTPLAVL (428 aa)) is condensation 8. An adenylation 9 region spans residues 10494–10892 (FRAQVAACPD…GRMDQQIKIR (399 aa)). The tract at residues 10959–11105 (IYAEIEEIDS…EYLADVVGAL (147 aa)) is methyltransferase (M) domain 5. The Carrier 9 domain occupies 11428–11502 (SARNEVEAVL…DLAASIERNS (75 aa)). Ser-11462 carries the O-(pantetheine 4'-phosphoryl)serine modification. Positions 11520-11945 (SFAQGRLWFL…EQPQTPIAVL (426 aa)) are condensation 9. Positions 11977–12377 (FRDQVAANPR…GRMDQQIKIR (401 aa)) are adenylation 10. The region spanning 12495–12569 (VPRNELEASL…DLALKVSSYI (75 aa)) is the Carrier 10 domain. Residue Ser-12529 is modified to O-(pantetheine 4'-phosphoryl)serine. Positions 12647-13032 (FPANADCDKI…RMHEEFCDII (386 aa)) are condensation 10.

This sequence belongs to the NRP synthetase family.

Its pathway is secondary metabolite biosynthesis. In terms of biological role, nonribosomal peptide synthetase; part of the gene cluster that mediates the biosynthesis of KK-1, a novel cyclic depsipeptide with 10 residues which is a promising active compound with high activity against many plant pathogens, especially Botrytis cinerea. The nonribosomal peptide synthetase (NRPS) kk1B catalyzes the elongation and cyclization of the decapeptide chain composed of 1 D-lactic acid residue (D-Lac), 1 pipecolic acid residue (Pip), 1 aspartic acid residue (Asp), 1 isoleucine residue (Ile), 1 glycine residue (Gly), 1 tyrosine residue (Tyr) and 4 valine residues (Val). The Asp, Ile and 3 Val residues are N-methylated by the 5 methyltransferase domains from the NRPS (found in modules 3, 5, 6, 7 and 9), whereas the Tyr residue is O-methylated by the cluster encoded O-methyltransferase kk1A. Cyclization with the hydroxy group of the D-lactic acid as a nucleophile is presumed to occur in the final module of NRPS, resulting in the formation of the depsipeptide ester bond through macrocyclization by the C-terminal C domain. The thioesterase kk1J is likely to be involved in the corrective mechanism of peptide chain synthesis. The D-lactate dehydrogenase kk1H is involved in the synthesis of D-lactic acid from pyruvic acid, which is recognized by the A domain of the first kk1B module. The pyrroline-5-carboxylate reductase kk1I is involved in the synthesis of the L-pipecolic acid residue of KK-1 from delta-1-pyrroline-5-carboxylate (P5C), a metabolic intermediate of lysine. It is still unclear how kk1C and kk1D are involved in the production of KK-1. The protein is Nonribosomal peptide synthetase kk1B of Curvularia clavata.